Consider the following 372-residue polypeptide: 4-hydroxy-3-methylbut-2-en-1-yl diphosphate synthase (flavodoxin) (372 aa).

[4Fe-4S] cluster-binding residues include C270, C273, C305, and E312.

Belongs to the IspG family. Requires [4Fe-4S] cluster as cofactor.

The catalysed reaction is (2E)-4-hydroxy-3-methylbut-2-enyl diphosphate + oxidized [flavodoxin] + H2O + 2 H(+) = 2-C-methyl-D-erythritol 2,4-cyclic diphosphate + reduced [flavodoxin]. The protein operates within isoprenoid biosynthesis; isopentenyl diphosphate biosynthesis via DXP pathway; isopentenyl diphosphate from 1-deoxy-D-xylulose 5-phosphate: step 5/6. Functionally, converts 2C-methyl-D-erythritol 2,4-cyclodiphosphate (ME-2,4cPP) into 1-hydroxy-2-methyl-2-(E)-butenyl 4-diphosphate. This Pseudoalteromonas translucida (strain TAC 125) protein is 4-hydroxy-3-methylbut-2-en-1-yl diphosphate synthase (flavodoxin).